Here is a 156-residue protein sequence, read N- to C-terminus: Snaclec A14 (156 aa).

An N-terminal signal peptide occupies residues 1–23; it reads MGRFIFVRVGLLVVFLSLSGTGA. Disulfide bonds link C27–C38, C55–C152, and C127–C144. One can recognise a C-type lectin domain in the interval 34–153; that stretch reads YDQHCYKAFD…CGDDYPFVCK (120 aa). A glycan (N-linked (GlcNAc...) asparagine) is linked at N141.

It belongs to the snaclec family. As to quaternary structure, heterodimer; disulfide-linked. In terms of tissue distribution, expressed by the venom gland.

Its subcellular location is the secreted. Its function is as follows. Interferes with one step of hemostasis (modulation of platelet aggregation, or coagulation cascade, for example). The sequence is that of Snaclec A14 from Macrovipera lebetinus (Levantine viper).